We begin with the raw amino-acid sequence, 311 residues long: tRNA dimethylallyltransferase (311 aa).

9–16 is an ATP binding site; it reads GPTAVGKT. A substrate-binding site is contributed by 11–16; the sequence is TAVGKT. The interaction with substrate tRNA stretch occupies residues 34–37; that stretch reads DSMQ.

Belongs to the IPP transferase family. Monomer. The cofactor is Mg(2+).

It carries out the reaction adenosine(37) in tRNA + dimethylallyl diphosphate = N(6)-dimethylallyladenosine(37) in tRNA + diphosphate. In terms of biological role, catalyzes the transfer of a dimethylallyl group onto the adenine at position 37 in tRNAs that read codons beginning with uridine, leading to the formation of N6-(dimethylallyl)adenosine (i(6)A). The sequence is that of tRNA dimethylallyltransferase from Clostridium botulinum (strain Loch Maree / Type A3).